A 371-amino-acid polypeptide reads, in one-letter code: Protein disulfide isomerase-like 2-2 (371 aa).

An N-terminal signal peptide occupies residues 1-27 (MAIPRISPRKTLPLFAALALALAWAFA). 2 consecutive Thioredoxin domains span residues 28–143 (APAF…TEGG) and 147–262 (KLAT…EKCG). Catalysis depends on nucleophile residues Cys-64, Cys-67, Cys-183, and Cys-186. Disulfide bonds link Cys-64/Cys-67 and Cys-183/Cys-186.

Belongs to the protein disulfide isomerase family.

The protein resides in the secreted. It catalyses the reaction Catalyzes the rearrangement of -S-S- bonds in proteins.. Acts as a protein-folding catalyst that interacts with nascent polypeptides to catalyze the formation, isomerization, and reduction or oxidation of disulfide bonds. May play a role in storage protein biogenesis. The chain is Protein disulfide isomerase-like 2-2 (PDIL2-2) from Oryza sativa subsp. japonica (Rice).